The sequence spans 294 residues: Kynurenine formamidase (294 aa).

Over residues 1-14 (MSRWKDMNKDELER) the composition is skewed to basic and acidic residues. The tract at residues 1-20 (MSRWKDMNKDELERQFSPSQ) is disordered. The HGGXW motif lies at 84 to 88 (HGGYW). Residue Ser153 is the Nucleophile of the active site. Residues Asp236 and His269 contribute to the active site.

This sequence belongs to the kynurenine formamidase family. As to quaternary structure, homodimer.

Its subcellular location is the cytoplasm. It localises to the cytosol. The protein resides in the nucleus. It catalyses the reaction N-formyl-L-kynurenine + H2O = L-kynurenine + formate + H(+). It participates in amino-acid degradation; L-tryptophan degradation via kynurenine pathway; L-kynurenine from L-tryptophan: step 2/2. Catalyzes the hydrolysis of N-formyl-L-kynurenine to L-kynurenine, the second step in the kynurenine pathway of tryptophan degradation. Kynurenine may be further oxidized to nicotinic acid, NAD(H) and NADP(H). Required for elimination of toxic metabolites. The polypeptide is Kynurenine formamidase (afmid) (Salmo salar (Atlantic salmon)).